The sequence spans 390 residues: Mannitol-1-phosphate 5-dehydrogenase (390 aa).

7–18 lines the NAD(+) pocket; sequence AVHFGGGNIGRG. Residue K216 is part of the active site.

Belongs to the mannitol dehydrogenase family. In terms of assembly, monomer.

The catalysed reaction is D-mannitol 1-phosphate + NAD(+) = beta-D-fructose 6-phosphate + NADH + H(+). In terms of biological role, catalyzes the NAD(H)-dependent interconversion of D-fructose 6-phosphate and D-mannitol 1-phosphate in the mannitol metabolic pathway. Required for the process of sporulation on senescing leaf material. This chain is Mannitol-1-phosphate 5-dehydrogenase (mpd1), found in Phaeosphaeria nodorum (strain SN15 / ATCC MYA-4574 / FGSC 10173) (Glume blotch fungus).